Consider the following 453-residue polypeptide: tRNA modification GTPase MnmE (453 aa).

R22, E79, and K119 together coordinate (6S)-5-formyl-5,6,7,8-tetrahydrofolate. The 162-residue stretch at G215–G376 folds into the TrmE-type G domain. N225 lines the K(+) pocket. GTP is bound by residues N225–S230, T244–T250, D269–G272, and N334–D337. A Mg(2+)-binding site is contributed by S229. 3 residues coordinate K(+): T244, I246, and T249. Residue T250 coordinates Mg(2+). K453 is a (6S)-5-formyl-5,6,7,8-tetrahydrofolate binding site.

This sequence belongs to the TRAFAC class TrmE-Era-EngA-EngB-Septin-like GTPase superfamily. TrmE GTPase family. As to quaternary structure, homodimer. Heterotetramer of two MnmE and two MnmG subunits. K(+) is required as a cofactor.

The protein localises to the cytoplasm. Its function is as follows. Exhibits a very high intrinsic GTPase hydrolysis rate. Involved in the addition of a carboxymethylaminomethyl (cmnm) group at the wobble position (U34) of certain tRNAs, forming tRNA-cmnm(5)s(2)U34. This is tRNA modification GTPase MnmE from Aeromonas hydrophila subsp. hydrophila (strain ATCC 7966 / DSM 30187 / BCRC 13018 / CCUG 14551 / JCM 1027 / KCTC 2358 / NCIMB 9240 / NCTC 8049).